A 506-amino-acid polypeptide reads, in one-letter code: MNTMTLTPGQLSLSQLYDVWRHPVQLRLDASAIDGINASVACVNDIVAEGRTAYGINTGFGLLAQTRIADEDLQNLQRSLVLSHAAGVGDPLDDAMVRLIMVLKINSLARGFSGIRLSVIEALIALVNAGVYPLIPAKGSVGASGDLAPLAHLSLTLLGEGKARWQGEWLPAQTALKKAGLEPVALAAKEGLALLNGTQASTAFALRGLFEAQELFASAVVCGALTTEAVLGSRRPFDARIHAARGQQGQIDVARLFRHLLTDTSAIAESHHHCHKVQDPYSLRCQPQVMGACLTQLRQTKEVLLAEANAVSDNPLVFADAGEVISGGNFHAEPVAMAADNLALAIAEIGALSERRIALMMDKHMSQLPPFLVKNGGVNSGFMIAQVTAAALASENKALAHPHSVDSLPTSANQEDHVSMAPAAGRRLWEMAANTRGIIAVEWLAACQGIDLREGLTSSPLLEQARQTLREQVAHYTQDRFFAPDIECATALLAQGALQRLVPDFM.

A cross-link (5-imidazolinone (Ala-Gly)) is located at residues 143–145 (ASG). Residue S144 is modified to 2,3-didehydroalanine (Ser).

The protein belongs to the PAL/histidase family. Contains an active site 4-methylidene-imidazol-5-one (MIO), which is formed autocatalytically by cyclization and dehydration of residues Ala-Ser-Gly.

The protein localises to the cytoplasm. It carries out the reaction L-histidine = trans-urocanate + NH4(+). It functions in the pathway amino-acid degradation; L-histidine degradation into L-glutamate; N-formimidoyl-L-glutamate from L-histidine: step 1/3. This Salmonella dublin (strain CT_02021853) protein is Histidine ammonia-lyase.